An 894-amino-acid chain; its full sequence is Interleukin enhancer-binding factor 3 (894 aa).

The DZF domain occupies 5–378; the sequence is RIFVNDDRHV…PMKRPMEEDG (374 aa). The tract at residues 50–86 is disordered; it reads DEQEKGSSEQAESDNMDVPPEDDSKEGAGEQKTEHMT. Over residues 60 to 73 the composition is skewed to acidic residues; the sequence is AESDNMDVPPEDDS. A Phosphoserine modification is found at S62. Residues 74–86 show a composition bias toward basic and acidic residues; it reads KEGAGEQKTEHMT. K100 bears the N6-acetyllysine mark. At T188 the chain carries Phosphothreonine; by PKR. S190 carries the post-translational modification Phosphoserine. K297 is covalently cross-linked (Glycyl lysine isopeptide (Lys-Gly) (interchain with G-Cter in ubiquitin)). T315 bears the Phosphothreonine; by PKR mark. A Glycyl lysine isopeptide (Lys-Gly) (interchain with G-Cter in SUMO1) cross-link involves residue K348. A disordered region spans residues 363–401; it reads TTYAITPMKRPMEEDGEEKSPSKKKKKIQKKEEKAEPPQ. The short motif at 371 to 389 is the Bipartite nuclear localization signal element; it reads KRPMEEDGEEKSPSKKKKK. Basic and acidic residues predominate over residues 372 to 383; the sequence is RPMEEDGEEKSP. 2 positions are modified to phosphoserine: S382 and S384. K396 is covalently cross-linked (Glycyl lysine isopeptide (Lys-Gly) (interchain with G-Cter in SUMO2)). Residues 398 to 467 enclose the DRBM 1 domain; the sequence is EPPQAMNALM…AVKVLQDMGL (70 aa). K460 is subject to N6-acetyllysine. The disordered stretch occupies residues 466–524; it reads GLPTGAEGRDSSKGEDSAEETEAKPAVVAPAPVVEAVSTPSAAFPSDATAEQGPILTKH. Residues 472–481 are compositionally biased toward basic and acidic residues; the sequence is EGRDSSKGED. Residues S476, S477, and S482 each carry the phosphoserine modification. K489 participates in a covalent cross-link: Glycyl lysine isopeptide (Lys-Gly) (interchain with G-Cter in SUMO2). Residues 489 to 508 are compositionally biased toward low complexity; it reads KPAVVAPAPVVEAVSTPSAA. Residues 524–590 form the DRBM 2 domain; that stretch reads HGKNPVMELN…ALAALEKLFP (67 aa). T592 carries the post-translational modification Phosphothreonine. Residues 609-894 are interaction with PRMT1; sequence RGGPKFAAKP…ADHSMNYQYR (286 aa). Disordered stretches follow at residues 625 to 660 and 718 to 894; these read MGGPMHNEVPPPPNLRGRGRGGSIRGRGRGRGFGGA and QGDN…YQYR. Positions 644–660 are enriched in gly residues; sequence RGGSIRGRGRGRGFGGA. Composition is skewed to low complexity over residues 743–770 and 777–792; these read PSYGSGYQSHQGQQQSYNQSPYSNYGPP and YNHGQGSYSYSNSYNS. Phosphoserine occurs at positions 792, 810, 812, and 816. 2 stretches are compositionally biased toward gly residues: residues 811 to 825 and 832 to 851; these read GSGGRSGGNSYGSGG and SHGGYGGGSGGGSSYQGKQG. Over residues 857–866 the composition is skewed to polar residues; that stretch reads NYNSPGSGQN. Low complexity predominate over residues 867–878; sequence YSGPPSSYQSSQ.

Identified in a IGF2BP1-dependent mRNP granule complex containing untranslated mRNAs. Interacts with FUS and SMN. Interacts (via C-terminus) with PRMT1. Forms a complex with ILF2. Can also bind to PRKDC/XRCC7: this may stabilize the interaction of PRKDC/XRCC7 and the heterodimeric complex of XRCC6/KU70 and XRCC5/KU80. Forms a heteromeric complex with ZNF346 and ILF3. Found in a nuclear export complex with XPO5, ILF3, Ran and double-stranded RNA or double-stranded minihelix VA1 RNA. Found in a nuclear export complex with XPO5, RAN, ILF3, ZNF346 and double-stranded RNA. Interacts with XPO5 and ZNF346. Forms a complex with ILF2, YLPM1, KHDRBS1, RBMX, NCOA5 and PPP1CA. Interacts with AGO1 and AGO2. Interacts with DHX36; this interaction occurs in a RNA-dependent manner. Interacts with ELAVL1; this interaction occurs in a RNA-dependent manner. Interacts with HAVCR2; this interaction promotes ILF3 ubiquitination and subsequent degradation. Post-translationally, phosphorylated at Thr-188 and Thr-315 by PKR in response to certain RNA viruses. This phosphorylation results in the dissociation of ILF2 from the ILF2-ILF3 complex resulting in a cytoplasmic sequestration of ILF3 where it can bind to viral RNAs and impede viral replication. Methylated by protein arginine N-methyltransferase 1. In terms of processing, ubiquitinated at Lys-297 in a TRIM47-dependent manner; this 'Lys-48'-linked ubiquitination promotes ILF3 degradation. Ubiquitous.

The protein localises to the nucleus. It is found in the nucleolus. Its subcellular location is the cytoplasm. Its function is as follows. RNA-binding protein that plays an essential role in the biogenesis of circular RNAs (circRNAs) which are produced by back-splicing circularization of pre-mRNAs. Within the nucleus, promotes circRNAs processing by stabilizing the regulatory elements residing in the flanking introns of the circularized exons. Plays thereby a role in the back-splicing of a subset of circRNAs. As a consequence, participates in a wide range of transcriptional and post-transcriptional processes. Binds to poly-U elements and AU-rich elements (AREs) in the 3'-UTR of target mRNAs. Upon viral infection, ILF3 accumulates in the cytoplasm and participates in the innate antiviral response. Mechanistically, ILF3 becomes phosphorylated and activated by the double-stranded RNA-activated protein kinase/PKR which releases ILF3 from cellular mature circRNAs. In turn, unbound ILF3 molecules are able to interact with and thus inhibit viral mRNAs. In terms of biological role, (Microbial infection) Plays a positive role in HIV-1 virus production by binding to and thereby stabilizing HIV-1 RNA, together with ILF3. In Homo sapiens (Human), this protein is Interleukin enhancer-binding factor 3 (ILF3).